The following is a 344-amino-acid chain: Dihydroorotase (344 aa).

2 residues coordinate Zn(2+): histidine 14 and histidine 16. Residues 16-18 and asparagine 42 contribute to the substrate site; that span reads HLR. Zn(2+)-binding residues include lysine 99, histidine 136, and histidine 174. Lysine 99 carries the post-translational modification N6-carboxylysine. Substrate is bound at residue histidine 136. Leucine 219 lines the substrate pocket. Zn(2+) is bound at residue aspartate 247. Aspartate 247 is an active-site residue. The substrate site is built by histidine 251 and alanine 263.

This sequence belongs to the metallo-dependent hydrolases superfamily. DHOase family. Class II DHOase subfamily. Homodimer. Zn(2+) serves as cofactor.

The enzyme catalyses (S)-dihydroorotate + H2O = N-carbamoyl-L-aspartate + H(+). It functions in the pathway pyrimidine metabolism; UMP biosynthesis via de novo pathway; (S)-dihydroorotate from bicarbonate: step 3/3. In terms of biological role, catalyzes the reversible cyclization of carbamoyl aspartate to dihydroorotate. This chain is Dihydroorotase, found in Teredinibacter turnerae (strain ATCC 39867 / T7901).